We begin with the raw amino-acid sequence, 246 residues long: Myelin-oligodendrocyte glycoprotein (246 aa).

The first 28 residues, 1–28 (MASLLSSSLPSCLPSLLFLLLQLTSSSA), serve as a signal peptide directing secretion. An Ig-like V-type domain is found at 29–144 (GQFRVIGPGH…EEAAMELKVE (116 aa)). At 29-153 (GQFRVIGPGH…EDPFYWINPG (125 aa)) the chain is on the extracellular side. A disulfide bridge connects residues cysteine 52 and cysteine 126. The N-linked (GlcNAc...) asparagine glycan is linked to asparagine 59. A helical membrane pass occupies residues 154–174 (VLVLIAVLPVLLLQITVGLVF). Residues 175 to 209 (LCLQRRLRGKLWAEIENLHRTFDPHFLMVPCWKIT) lie on the Cytoplasmic side of the membrane. Residues 210–230 (LFVIVPVLGPLVALIICYNWL) traverse the membrane as a helical segment. Residues 231-246 (HRRLAGQFLEELRNPF) lie on the Extracellular side of the membrane.

This sequence belongs to the immunoglobulin superfamily. BTN/MOG family. As to quaternary structure, homodimer. As to expression, found exclusively in the CNS, where it is localized on the surface of myelin and oligodendrocyte cytoplasmic membranes.

It is found in the membrane. Functionally, mediates homophilic cell-cell adhesion. Minor component of the myelin sheath. May be involved in completion and/or maintenance of the myelin sheath and in cell-cell communication. This Bos taurus (Bovine) protein is Myelin-oligodendrocyte glycoprotein (MOG).